A 146-amino-acid chain; its full sequence is Large ribosomal subunit protein uL15 (146 aa).

Positions Met1 to Pro65 are disordered. A compositionally biased stretch (gly residues) spans Arg24–Ala34.

It belongs to the universal ribosomal protein uL15 family. As to quaternary structure, part of the 50S ribosomal subunit.

Binds to the 23S rRNA. This chain is Large ribosomal subunit protein uL15, found in Bordetella avium (strain 197N).